A 490-amino-acid polypeptide reads, in one-letter code: Adenylyltransferase and sulfurtransferase uba4 (490 aa).

The disordered stretch occupies residues 33-54 (EAAKTPPYSDSTETDRGSSSST). ATP is bound by residues Gly-96, Asp-117, 124–128 (SNLHR), Lys-141, and 185–186 (DH). Zn(2+) contacts are provided by Cys-234 and Cys-237. Cys-251 acts as the Glycyl thioester intermediate; for adenylyltransferase activity in catalysis. Residues Cys-323 and Cys-326 each coordinate Zn(2+). The Rhodanese domain maps to 379–488 (EHGKPVLLDV…WKREVDSTLP (110 aa)). Cys-443 acts as the Cysteine persulfide intermediate; for sulfurtransferase activity in catalysis.

It in the N-terminal section; belongs to the HesA/MoeB/ThiF family. UBA4 subfamily. Requires Zn(2+) as cofactor.

It localises to the cytoplasm. It is found in the cytosol. The enzyme catalyses [molybdopterin-synthase sulfur-carrier protein]-C-terminal Gly-Gly + ATP + H(+) = [molybdopterin-synthase sulfur-carrier protein]-C-terminal Gly-Gly-AMP + diphosphate. It carries out the reaction [molybdopterin-synthase sulfur-carrier protein]-C-terminal Gly-Gly-AMP + S-sulfanyl-L-cysteinyl-[cysteine desulfurase] + AH2 = [molybdopterin-synthase sulfur-carrier protein]-C-terminal-Gly-aminoethanethioate + L-cysteinyl-[cysteine desulfurase] + A + AMP + 2 H(+). It participates in tRNA modification; 5-methoxycarbonylmethyl-2-thiouridine-tRNA biosynthesis. Its function is as follows. Plays a central role in 2-thiolation of mcm(5)S(2)U at tRNA wobble positions of cytosolic tRNA(Lys), tRNA(Glu) and tRNA(Gln). Also essential during biosynthesis of the molybdenum cofactor. Acts by mediating the C-terminal thiocarboxylation of sulfur carriers URM1 and MOCS2A. Its N-terminus first activates urm1 and MOCS2A as acyl-adenylates (-COAMP), then the persulfide sulfur on the catalytic cysteine is transferred to URM1 and MOCS2A to form thiocarboxylation (-COSH) of their C-terminus. The reaction probably involves hydrogen sulfide that is generated from the persulfide intermediate and that acts as a nucleophile towards URM1 and MOCS2A. Subsequently, a transient disulfide bond is formed. Does not use thiosulfate as sulfur donor; NFS1 probably acting as a sulfur donor for thiocarboxylation reactions. The chain is Adenylyltransferase and sulfurtransferase uba4 from Pyricularia oryzae (strain 70-15 / ATCC MYA-4617 / FGSC 8958) (Rice blast fungus).